Here is a 258-residue protein sequence, read N- to C-terminus: Probable parvulin-type peptidyl-prolyl cis-trans isomerase (258 aa).

Positions 1–19 (MKRIAMLAAACVIAVPAFA) are cleaved as a signal peptide. Positions 127-219 (KMEYKVRHIL…FGWHVIQVDD (93 aa)) constitute a PpiC domain. Basic and acidic residues predominate over residues 158–175 (DDLAKKNSKDPGSAERGG). The disordered stretch occupies residues 158-178 (DDLAKKNSKDPGSAERGGDLG).

This sequence belongs to the PpiC/parvulin rotamase family.

It catalyses the reaction [protein]-peptidylproline (omega=180) = [protein]-peptidylproline (omega=0). In Bordetella bronchiseptica (strain ATCC BAA-588 / NCTC 13252 / RB50) (Alcaligenes bronchisepticus), this protein is Probable parvulin-type peptidyl-prolyl cis-trans isomerase.